Here is a 311-residue protein sequence, read N- to C-terminus: Short chain dehydrogenase opdN (311 aa).

Positions 48, 73, 96, 123, 217, and 221 each coordinate NADP(+). Tyrosine 217 acts as the Proton donor in catalysis. Lysine 221 acts as the Lowers pKa of active site Tyr in catalysis.

The protein belongs to the short-chain dehydrogenases/reductases (SDR) family.

Its pathway is secondary metabolite biosynthesis. In terms of biological role, short chain dehydrogenase; part of the gene cluster that mediates the biosynthesis of oxopyrrolidines, polyketide-amino acid hybrid compounds with feature structures of tetramic acid. Does not seem to play a role in oxopyrrolidines A and B biosynthesis. May be involved in further modifications of these oxopyrrolidines. The sequence is that of Short chain dehydrogenase opdN from Penicillium oxalicum (strain 114-2 / CGMCC 5302) (Penicillium decumbens).